A 297-amino-acid polypeptide reads, in one-letter code: Giardin subunit alpha-6 (297 aa).

4 Annexin repeats span residues 3-72 (TTVQ…AYLW), 74-146 (KPGD…HWIL), 153-222 (FDID…AAHY), and 226-295 (HPAR…ILWR).

The protein belongs to the annexin family. Giardin subunit alpha subfamily.

It is found in the cytoplasm. The protein localises to the cytoskeleton. Functionally, giardins are involved in parasite attachment to the intestinal mucosa and in the cytoskeletal disassembly and reassembly that marks the transition from infectious trophozoite to transmissible cyst. They may interact with other cytoskeletal proteins such as microtubules in the microribbons or crossbridges, to maintain the integrity of the ventral disk. The polypeptide is Giardin subunit alpha-6 (Giardia intestinalis (Giardia lamblia)).